We begin with the raw amino-acid sequence, 348 residues long: Protein RecA (348 aa).

66–73 serves as a coordination point for ATP; the sequence is GPESSGKT.

It belongs to the RecA family.

Its subcellular location is the cytoplasm. In terms of biological role, can catalyze the hydrolysis of ATP in the presence of single-stranded DNA, the ATP-dependent uptake of single-stranded DNA by duplex DNA, and the ATP-dependent hybridization of homologous single-stranded DNAs. It interacts with LexA causing its activation and leading to its autocatalytic cleavage. This Legionella pneumophila protein is Protein RecA.